A 399-amino-acid polypeptide reads, in one-letter code: Acetate kinase (399 aa).

Asn-10 lines the Mg(2+) pocket. Lys-17 is a binding site for ATP. Residue Arg-91 participates in substrate binding. The active-site Proton donor/acceptor is Asp-148. ATP-binding positions include 208-212, 283-285, and 331-335; these read HLGNG, DCR, and GIGEN. Glu-385 contributes to the Mg(2+) binding site.

This sequence belongs to the acetokinase family. Homodimer. Mg(2+) serves as cofactor. It depends on Mn(2+) as a cofactor.

Its subcellular location is the cytoplasm. The catalysed reaction is acetate + ATP = acetyl phosphate + ADP. The protein operates within metabolic intermediate biosynthesis; acetyl-CoA biosynthesis; acetyl-CoA from acetate: step 1/2. Functionally, catalyzes the formation of acetyl phosphate from acetate and ATP. Can also catalyze the reverse reaction. This Shewanella baltica (strain OS223) protein is Acetate kinase.